Reading from the N-terminus, the 567-residue chain is MAQRIFTLILLLCSTSAFAGLFDAPGRSQFVPADRAFVFDFQQNQHDLTLSWQVKEGYYLYRKQISITPTKADIAAVQLPAGVWHEDEFYGKSEIYRKRLNVPVTVNQAAAGATLTVTYQGCADAGFCYPPETKTVPLSEVAAAIDATPTPAVTQTGETSKPAAQLPFSALWALLIGIGIAFTPCVLPMYPLISGIVLGGRQRLSTGRALLLAFIYVQGMALTYTALGLVAAAAGLQFQAALQHPYVLIGLAIVFTLLALSMFGLFTLQLPSSLQTRLTLMSNRQQGGSPGGVFVMGAIAGLICSPCTTAPLSAILLYIAQSGNMWLGGGTLYLYALGMGLPLMLVTVFGNRLLPKSGPWMAHVKTAFGFVILALPVFLLERIIGEAWGLRLWSLLGVAFFGWAFITSLQARRAGMRIVQIILLAAALISVRPLQDWAFGSPSAQAPAHLNFTAISTVDELNQALAQAKGNPVMLDFYADWCVACKEFEKYTFSDPRVQQALGDTVLLQANVTANNAQDVALLKHLQVLGLPTILFFDAQGQEQPQARVTGFMDAATFSAHLHDRQP.

The N-terminal stretch at 1–19 is a signal peptide; the sequence is MAQRIFTLILLLCSTSAFA. 2 cysteine pairs are disulfide-bonded: C122–C128 and C185–C307. A run of 8 helical transmembrane segments spans residues 166–186, 210–230, 246–266, 299–319, 326–346, 360–380, 387–407, and 418–438; these read LPFS…TPCV, LLLA…LGLV, YVLI…FGLF, IAGL…LLYI, WLGG…LMLV, WMAH…VFLL, AWGL…AFIT, and IVQI…QDWA. One can recognise a Thioredoxin domain in the interval 435–567; the sequence is QDWAFGSPSA…FSAHLHDRQP (133 aa). C482 and C485 are oxidised to a cystine.

The protein belongs to the thioredoxin family. DsbD subfamily.

The protein resides in the cell inner membrane. It catalyses the reaction [protein]-dithiol + NAD(+) = [protein]-disulfide + NADH + H(+). The enzyme catalyses [protein]-dithiol + NADP(+) = [protein]-disulfide + NADPH + H(+). In terms of biological role, required to facilitate the formation of correct disulfide bonds in some periplasmic proteins and for the assembly of the periplasmic c-type cytochromes. Acts by transferring electrons from cytoplasmic thioredoxin to the periplasm. This transfer involves a cascade of disulfide bond formation and reduction steps. This chain is Thiol:disulfide interchange protein DsbD, found in Salmonella choleraesuis (strain SC-B67).